Here is a 208-residue protein sequence, read N- to C-terminus: Protein-L-isoaspartate O-methyltransferase (208 aa).

S59 is an active-site residue.

The protein belongs to the methyltransferase superfamily. L-isoaspartyl/D-aspartyl protein methyltransferase family.

The protein resides in the cytoplasm. It carries out the reaction [protein]-L-isoaspartate + S-adenosyl-L-methionine = [protein]-L-isoaspartate alpha-methyl ester + S-adenosyl-L-homocysteine. In terms of biological role, catalyzes the methyl esterification of L-isoaspartyl residues in peptides and proteins that result from spontaneous decomposition of normal L-aspartyl and L-asparaginyl residues. It plays a role in the repair and/or degradation of damaged proteins. The sequence is that of Protein-L-isoaspartate O-methyltransferase from Proteus mirabilis (strain HI4320).